The chain runs to 276 residues: Neuroendocrine protein 7B2 (276 aa).

C155 and C168 form a disulfide bridge.

It belongs to the 7B2 family. In terms of assembly, interacts with amon/PC2 early in the secretory pathway. Dissociation occurs at later stages.

The protein resides in the secreted. Acts as a molecular chaperone for neuroendocrine convertase amon/PC2, preventing its premature activation in the regulated secretory pathway. Binds to inactive amon in the endoplasmic reticulum and facilitates its transport from there to later compartments of the secretory pathway where it is proteolytically matured and activated. Also required for cleavage of amon. In Drosophila melanogaster (Fruit fly), this protein is Neuroendocrine protein 7B2.